The chain runs to 301 residues: GTPase Era (301 aa).

The Era-type G domain occupies 7–175; it reads YCGFIAIVGR…AGIVRKHLPE (169 aa). Positions 15–22 are G1; that stretch reads GRPNVGKS. Position 15 to 22 (15 to 22) interacts with GTP; it reads GRPNVGKS. The tract at residues 41 to 45 is G2; sequence QTTRH. Residues 62–65 form a G3 region; it reads DTPG. Residues 62–66 and 124–127 each bind GTP; these read DTPGL and NKVD. The segment at 124–127 is G4; sequence NKVD. Residues 154-156 are G5; it reads ISA. Positions 206 to 283 constitute a KH type-2 domain; that stretch reads LGAELPYSVT…HLELWVKVKS (78 aa).

It belongs to the TRAFAC class TrmE-Era-EngA-EngB-Septin-like GTPase superfamily. Era GTPase family. As to quaternary structure, monomer.

Its subcellular location is the cytoplasm. It localises to the cell inner membrane. Its function is as follows. An essential GTPase that binds both GDP and GTP, with rapid nucleotide exchange. Plays a role in 16S rRNA processing and 30S ribosomal subunit biogenesis and possibly also in cell cycle regulation and energy metabolism. The sequence is that of GTPase Era from Salmonella paratyphi B (strain ATCC BAA-1250 / SPB7).